We begin with the raw amino-acid sequence, 340 residues long: Short-chain dehydrogenase/reductase prx1 (340 aa).

NADP(+)-binding residues include Ile-60, Lys-84, Asp-104, Asn-131, and Lys-162. The active-site Proton donor is Ser-184. Tyr-210 and Lys-214 together coordinate NADP(+). Tyr-210 acts as the Proton acceptor in catalysis. The active-site Lowers pKa of active site Tyr is Lys-214.

The protein belongs to the short-chain dehydrogenases/reductases (SDR) family.

It participates in sesquiterpene biosynthesis. Short-chain dehydrogenase/reductase; part of the gene cluster that mediates the biosynthesis of PR-toxin, a bicyclic sesquiterpene belonging to the eremophilane class and acting as a mycotoxin. The first step of the pathway is catalyzed by the aristolochene synthase which performs the cyclization of trans,trans-farnesyl diphosphate (FPP) to the bicyclic sesquiterpene aristolochene. Following the formation of aristolochene, the non-oxygenated aristolochene is converted to the trioxygenated intermediate eremofortin B, via 7-epi-neopetasone. This conversion appears to involve three enzymes, a hydroxysterol oxidase-like enzyme, the quinone-oxidase prx3 that forms the quinone-type-structure in the bicyclic nucleus of aristolochene with the C8-oxo group and the C-3 hydroxyl group, and the P450 monooxygenase prx9 that introduces the epoxide at the double bond between carbons 1 and 2. No monoxy or dioxy-intermediates have been reported to be released to the broth, so these three early oxidative reactions may be coupled together. Eremofortin B is further oxidized by another P450 monooxygenase, that introduces a second epoxide between carbons 7 and 11 prior to acetylation to eremofortin A by the acetyltransferase prx11. The second epoxidation may be performed by a second P450 monooxygenase. After the acetylation step, eremofortin A is converted to eremofortin C and then to PR-toxin. First the conversion of eremofortin A to eremofortin C proceeds by oxidation of the side chain of the molecule at C-12 and is catalyzed by the short-chain oxidoreductase prx1. The cytochrome P450 monooxygenase prx8 also plays a role in this step. The primary alcohol formed at C-12 is finally oxidized by the short-chain alcohol dehydrogenase prx4 that forms PR-toxin. In Penicillium rubens (strain ATCC 28089 / DSM 1075 / NRRL 1951 / Wisconsin 54-1255) (Penicillium chrysogenum), this protein is Short-chain dehydrogenase/reductase prx1.